Here is a 397-residue protein sequence, read N- to C-terminus: Elongation factor Tu (397 aa).

Residues 10 to 207 (KPHCNIGTIG…AVDEYIPQPE (198 aa)) form the tr-type G domain. Positions 19–26 (GHVDHGKT) are G1. Residue 19–26 (GHVDHGKT) coordinates GTP. T26 is a binding site for Mg(2+). The tract at residues 61 to 65 (GITIS) is G2. The segment at 82-85 (DCPG) is G3. Residues 82 to 86 (DCPGH) and 137 to 140 (NKVD) each bind GTP. Residues 137–140 (NKVD) form a G4 region. The interval 175–177 (SAL) is G5.

This sequence belongs to the TRAFAC class translation factor GTPase superfamily. Classic translation factor GTPase family. EF-Tu/EF-1A subfamily. In terms of assembly, monomer.

Its subcellular location is the cytoplasm. The catalysed reaction is GTP + H2O = GDP + phosphate + H(+). In terms of biological role, GTP hydrolase that promotes the GTP-dependent binding of aminoacyl-tRNA to the A-site of ribosomes during protein biosynthesis. This chain is Elongation factor Tu, found in Zymomonas mobilis subsp. mobilis (strain ATCC 31821 / ZM4 / CP4).